Consider the following 155-residue polypeptide: 3-hydroxyacyl-[acyl-carrier-protein] dehydratase FabZ (155 aa).

H57 is a catalytic residue.

This sequence belongs to the thioester dehydratase family. FabZ subfamily.

Its subcellular location is the cytoplasm. The enzyme catalyses a (3R)-hydroxyacyl-[ACP] = a (2E)-enoyl-[ACP] + H2O. In terms of biological role, involved in unsaturated fatty acids biosynthesis. Catalyzes the dehydration of short chain beta-hydroxyacyl-ACPs and long chain saturated and unsaturated beta-hydroxyacyl-ACPs. This Cereibacter sphaeroides (strain KD131 / KCTC 12085) (Rhodobacter sphaeroides) protein is 3-hydroxyacyl-[acyl-carrier-protein] dehydratase FabZ.